A 1157-amino-acid polypeptide reads, in one-letter code: Hephaestin (1157 aa).

An N-terminal signal peptide occupies residues 1–23; sequence MKAGHLLWALLLMHSLCSLPTDG. 6 Plastocyanin-like domains span residues 24–206, 218–366, 370–559, 569–717, 730–902, and 910–1066; these read AIRN…LITC, QRKD…VDSC, PPVE…LLVC, KQKG…VSQC, ASRV…LVIC, and NGGR…SHEE. At 24 to 1109 the chain is on the extracellular side; that stretch reads AIRNYYLGIQ…PVKNVEILSS (1086 aa). N-linked (GlcNAc...) asparagine glycans are attached at residues Asn49 and Asn54. Gly70 and Tyr73 together coordinate Na(+). Residues His126 and His128 each coordinate Cu(2+). His126 serves as a coordination point for O2. Ca(2+)-binding residues include Lys134, Asp152, and Asp153. N-linked (GlcNAc...) asparagine glycosylation occurs at Asn164. The cysteines at positions 180 and 206 are disulfide-linked. Positions 186 and 188 each coordinate Cu(2+). His186 provides a ligand contact to O2. Asn236 carries an N-linked (GlcNAc...) asparagine glycan. A Na(+)-binding site is contributed by Ser265. Residues Cys285 and Cys366 are joined by a disulfide bond. Cu(2+) is bound by residues His304, Cys347, and His352. 3 residues coordinate Na(+): Tyr416, Gly425, and Tyr428. Residues Cys533 and Cys559 are joined by a disulfide bond. Residue Asn587 is glycosylated (N-linked (GlcNAc...) asparagine). Ser616 lines the Na(+) pocket. Cys636 and Cys717 are joined by a disulfide. Residues His655, Cys698, His703, and Met708 each contribute to the Cu(2+) site. 2 N-linked (GlcNAc...) asparagine glycosylation sites follow: Asn713 and Asn757. Residues Phe768 and Gly777 each coordinate Na(+). The cysteines at positions 876 and 902 are disulfide-linked. A glycan (N-linked (GlcNAc...) asparagine) is linked at Asn930. Residues His999, His1002, His1004, His1044, Cys1045, His1046, His1050, and Met1055 each contribute to the Cu(2+) site. O2 contacts are provided by His1002 and His1004. His1046 is a binding site for O2. A helical transmembrane segment spans residues 1110–1130; the sequence is ALIAICVVLLLIALALGGVVW. Residues 1131-1157 are Cytoplasmic-facing; the sequence is YQHRQRKLRRNRRSILDDSFKLLSLKQ. 3 positions are modified to phosphoserine: Ser1144, Ser1149, and Ser1154.

Belongs to the multicopper oxidase family. Part of a complex composed of SLC40A1/ferroportin, TF/transferrin and HEPH/hephaestin that transfers iron from cells to transferrin. Cu cation serves as cofactor. In terms of tissue distribution, highly expressed in small intestine and colon.

It localises to the basolateral cell membrane. The enzyme catalyses 4 Fe(2+) + O2 + 4 H(+) = 4 Fe(3+) + 2 H2O. Functionally, plasma membrane ferroxidase that mediates the extracellular conversion of ferrous/Fe(2+) iron into its ferric/Fe(3+) form. Couples ferroportin which specifically exports ferrous/Fe(2+) iron from cells to transferrin that only binds and shuttles extracellular ferric/Fe(3+) iron throughout the body. By helping iron transfer from cells to blood mainly contributes to dietary iron absorption by the intestinal epithelium and more generally regulates iron levels in the body. The polypeptide is Hephaestin (Rattus norvegicus (Rat)).